The sequence spans 76 residues: Omega-conotoxin-like TxO5 (76 aa).

Residues 1–22 (MKLTCMMIVAVLFLTAWTFVTA) form the signal peptide. Residues 23-48 (ITSNGLENLFPKAHHEMKNPEASKLN) constitute a propeptide that is removed on maturation. Intrachain disulfides connect cysteine 51–cysteine 66, cysteine 58–cysteine 70, and cysteine 65–cysteine 75.

Belongs to the conotoxin O1 superfamily. In terms of tissue distribution, expressed by the venom duct.

The protein resides in the secreted. Functionally, omega-conotoxins act at presynaptic membranes, they bind and block voltage-gated calcium channels (Cav). This Conus textile (Cloth-of-gold cone) protein is Omega-conotoxin-like TxO5.